The primary structure comprises 468 residues: Putative ankyrin repeat protein R580 (468 aa).

ANK repeat units follow at residues 12–41, 189–218, 249–278, 336–365, 367–393, and 394–423; these read DYFDPINLSIKDGGEKTIDIIDCERYTLID, VINKSLNFASKSNMSELAIFLVDNGAEINC, CHFDLVEAVFNSGSLEMIETFIDFGMKINS, SFDNALVSTINAGKFKNAEYLLFSGANINF, NMPTNCMFKINFQTIKFLIDNNFDLEI, and HGTLILNKSLLNGYYDCANILIENGVKFSL.

The chain is Putative ankyrin repeat protein R580 from Acanthamoeba polyphaga (Amoeba).